We begin with the raw amino-acid sequence, 141 residues long: Nucleoside triphosphatase NudI (141 aa).

One can recognise a Nudix hydrolase domain in the interval 1–141 (MRQRTIVCPL…RKTLRLKGLL (141 aa)). A Nudix box motif is present at residues 38–59 (GGVESGERIEEALRREIREELG).

It belongs to the Nudix hydrolase family. NudI subfamily. As to quaternary structure, monomer. The cofactor is Mg(2+).

The enzyme catalyses a ribonucleoside 5'-triphosphate + H2O = a ribonucleoside 5'-phosphate + diphosphate + H(+). It catalyses the reaction a 2'-deoxyribonucleoside 5'-triphosphate + H2O = a 2'-deoxyribonucleoside 5'-phosphate + diphosphate + H(+). The catalysed reaction is dUTP + H2O = dUMP + diphosphate + H(+). It carries out the reaction dTTP + H2O = dTMP + diphosphate + H(+). The enzyme catalyses dCTP + H2O = dCMP + diphosphate + H(+). In terms of biological role, catalyzes the hydrolysis of nucleoside triphosphates, with a preference for pyrimidine deoxynucleoside triphosphates (dUTP, dTTP and dCTP). This Shigella flexneri serotype 5b (strain 8401) protein is Nucleoside triphosphatase NudI.